A 261-amino-acid polypeptide reads, in one-letter code: Na(+)-translocating NADH-quinone reductase subunit C (261 aa).

The helical transmembrane segment at 12 to 32 threads the bilayer; that stretch reads LGVVIGLSLVCSIIVSTAAVG. Threonine 229 carries the FMN phosphoryl threonine modification.

It belongs to the NqrC family. Composed of six subunits; NqrA, NqrB, NqrC, NqrD, NqrE and NqrF. The cofactor is FMN.

It localises to the cell inner membrane. The catalysed reaction is a ubiquinone + n Na(+)(in) + NADH + H(+) = a ubiquinol + n Na(+)(out) + NAD(+). NQR complex catalyzes the reduction of ubiquinone-1 to ubiquinol by two successive reactions, coupled with the transport of Na(+) ions from the cytoplasm to the periplasm. NqrA to NqrE are probably involved in the second step, the conversion of ubisemiquinone to ubiquinol. The polypeptide is Na(+)-translocating NADH-quinone reductase subunit C (Vibrio parahaemolyticus serotype O3:K6 (strain RIMD 2210633)).